The chain runs to 138 residues: Putative pre-16S rRNA nuclease (138 aa).

The protein belongs to the YqgF nuclease family.

It localises to the cytoplasm. In terms of biological role, could be a nuclease involved in processing of the 5'-end of pre-16S rRNA. This chain is Putative pre-16S rRNA nuclease, found in Clostridium tetani (strain Massachusetts / E88).